The chain runs to 117 residues: Fluoride-specific ion channel FluC 1 (117 aa).

The next 4 membrane-spanning stretches (helical) occupy residues 1 to 21 (MIHI…RAWL), 35 to 55 (IATL…YGIA), 60 to 80 (LFSL…STLS), and 97 to 117 (FSYS…GYSI). Residues glycine 71 and threonine 74 each contribute to the Na(+) site.

It belongs to the fluoride channel Fluc/FEX (TC 1.A.43) family.

It is found in the cell membrane. It carries out the reaction fluoride(in) = fluoride(out). Na(+) is not transported, but it plays an essential structural role and its presence is essential for fluoride channel function. Functionally, fluoride-specific ion channel. Important for reducing fluoride concentration in the cell, thus reducing its toxicity. This chain is Fluoride-specific ion channel FluC 1, found in Staphylococcus haemolyticus (strain JCSC1435).